The primary structure comprises 123 residues: MSIKISAIALFMLSFTVFVNGIPFFLTKGRIDTCKTLTGETIKIGESWHDPNSCSVYYCEVNSLGAMLIGKTCATVFYPSNCREEPGTGLYPDCCNKVVCGEEEMVVYPYEERSLRRYYFSKF.

The signal sequence occupies residues 1–21 (MSIKISAIALFMLSFTVFVNG).

This sequence belongs to the scorpion La1-like peptide family. Post-translationally, contains 4 disulfide bonds. Expressed by the venom gland.

Its subcellular location is the secreted. The protein is Venom peptide MmKTx1 of Olivierus martensii (Manchurian scorpion).